The following is a 529-amino-acid chain: Listeriolysin O (529 aa).

The N-terminal stretch at 1–24 is a signal peptide; sequence MKKIMLVFITLILVSLPIAQQTEA. 4 beta stranded membrane-spanning segments follow: residues 214 to 227, 234 to 243, 312 to 321, and 329 to 341; these read ESQL…AFKA, VNFGAISEGK, STKVKAAFDA, and SGDV…IKNS. Positions 483–493 match the Conserved undecapeptide motif; that stretch reads ECTGLAWEWWR. Positions 515-516 match the Cholesterol binding motif; it reads TL.

It belongs to the cholesterol-dependent cytolysin family. As to quaternary structure, homooligomeric pore complex of 35 to 50 subunits; when inserted in the host membrane.

It is found in the secreted. The protein resides in the host membrane. Its subcellular location is the host cell membrane. With respect to regulation, activity of listeriolysin O is regulated on multiple levels. It should be high in the phagosome, thereby allowing escape of the bacteria from the phagosomal compartment. Then, once inside the host cytosol, the activity must be controlled to prevent lysis of the host plasma membrane and loss of the intracellular environment. A cholesterol-dependent toxin that causes cytolysis by forming pores in cholesterol containing host membranes. After binding to target membranes, the protein undergoes a major conformation change, leading to its insertion in the host membrane and formation of an oligomeric pore complex. Cholesterol is required for binding to host membranes, membrane insertion and pore formation; cholesterol binding is mediated by a Thr-Leu pair in the C-terminus. Acts as a major virulence factor required for the escape of bacteria from phagosomal vacuoles and entry into the host cytosol. Can be reversibly inactivated by oxidation. This is Listeriolysin O (hly) from Listeria monocytogenes serotype 4b (strain F2365).